Here is a 700-residue protein sequence, read N- to C-terminus: Elongation factor G 2 (700 aa).

Positions 8 to 290 constitute a tr-type G domain; it reads ERYRNIGISA…AVIDFLPSPV (283 aa). GTP is bound by residues 17–24, 88–92, and 142–145; these read AHIDAGKT, DTPGH, and NKMD.

Belongs to the TRAFAC class translation factor GTPase superfamily. Classic translation factor GTPase family. EF-G/EF-2 subfamily.

The protein resides in the cytoplasm. Functionally, catalyzes the GTP-dependent ribosomal translocation step during translation elongation. During this step, the ribosome changes from the pre-translocational (PRE) to the post-translocational (POST) state as the newly formed A-site-bound peptidyl-tRNA and P-site-bound deacylated tRNA move to the P and E sites, respectively. Catalyzes the coordinated movement of the two tRNA molecules, the mRNA and conformational changes in the ribosome. The protein is Elongation factor G 2 of Burkholderia orbicola (strain AU 1054).